A 505-amino-acid polypeptide reads, in one-letter code: Lysine--tRNA ligase (505 aa).

Glu-415 and Glu-422 together coordinate Mg(2+).

The protein belongs to the class-II aminoacyl-tRNA synthetase family. In terms of assembly, homodimer. Mg(2+) is required as a cofactor.

It localises to the cytoplasm. It catalyses the reaction tRNA(Lys) + L-lysine + ATP = L-lysyl-tRNA(Lys) + AMP + diphosphate. The sequence is that of Lysine--tRNA ligase from Edwardsiella ictaluri (strain 93-146).